We begin with the raw amino-acid sequence, 63 residues long: Large ribosomal subunit protein uL29 (63 aa).

It belongs to the universal ribosomal protein uL29 family.

The sequence is that of Large ribosomal subunit protein uL29 from Bacillus cereus (strain ATCC 14579 / DSM 31 / CCUG 7414 / JCM 2152 / NBRC 15305 / NCIMB 9373 / NCTC 2599 / NRRL B-3711).